Reading from the N-terminus, the 361-residue chain is Deoxyribonuclease-2-beta (361 aa).

Residues 1–27 form the signal peptide; sequence MKQKMMARLLRTSFALLFLGLFGVLGA. N81, N103, N119, and N278 each carry an N-linked (GlcNAc...) asparagine glycan.

The protein belongs to the DNase II family. In terms of tissue distribution, highly expressed in the eye lens and in salivary gland. Detected at lower levels in lung, prostate and lymph node. Isoform 2 is lung specific.

It is found in the lysosome. It catalyses the reaction Endonucleolytic cleavage to nucleoside 3'-phosphates and 3'-phosphooligonucleotide end-products.. Functionally, hydrolyzes DNA under acidic conditions. Does not require divalent cations for activity. Participates in the degradation of nuclear DNA during lens cell differentiation. The protein is Deoxyribonuclease-2-beta (DNASE2B) of Homo sapiens (Human).